The following is a 221-amino-acid chain: Probable septum site-determining protein MinC (221 aa).

This sequence belongs to the MinC family. Interacts with MinD and FtsZ.

In terms of biological role, cell division inhibitor that blocks the formation of polar Z ring septums. Rapidly oscillates between the poles of the cell to destabilize FtsZ filaments that have formed before they mature into polar Z rings. Prevents FtsZ polymerization. The sequence is that of Probable septum site-determining protein MinC from Shewanella halifaxensis (strain HAW-EB4).